A 310-amino-acid polypeptide reads, in one-letter code: Tagatose-6-phosphate kinase (310 aa).

Belongs to the carbohydrate kinase PfkB family. LacC subfamily.

The enzyme catalyses D-tagatofuranose 6-phosphate + ATP = D-tagatofuranose 1,6-bisphosphate + ADP + H(+). The protein operates within carbohydrate metabolism; D-tagatose 6-phosphate degradation; D-glyceraldehyde 3-phosphate and glycerone phosphate from D-tagatose 6-phosphate: step 1/2. This chain is Tagatose-6-phosphate kinase, found in Streptococcus uberis (strain ATCC BAA-854 / 0140J).